Consider the following 744-residue polypeptide: Vesicle-fusing ATPase (744 aa).

Lys-105 is subject to N6-acetyllysine. A Phosphoserine modification is found at Ser-207. The residue at position 259 (Tyr-259) is a Phosphotyrosine. ATP is bound by residues Asn-505–Trp-510 and Pro-545–Leu-552. Thr-550 serves as a coordination point for Mg(2+). At Ser-569 the chain carries Phosphoserine; by CDK16.

This sequence belongs to the AAA ATPase family. As to quaternary structure, homohexamer. Interacts with GABARAP and GABARAPL2. Interacts with GRIA2. Interacts with PLK2, leading to disrupt the interaction with GRIA2. Interacts with MUSK; may regulate MUSK endocytosis and activity. Interacts with CDK16. It depends on Mg(2+) as a cofactor. In terms of processing, phosphorylation at Ser-569 interferes with homohexamerization.

The protein resides in the cytoplasm. It carries out the reaction ATP + H2O = ADP + phosphate + H(+). Its function is as follows. Required for vesicle-mediated transport. Catalyzes the fusion of transport vesicles within the Golgi cisternae. Is also required for transport from the endoplasmic reticulum to the Golgi stack. Seems to function as a fusion protein required for the delivery of cargo proteins to all compartments of the Golgi stack independent of vesicle origin. Interaction with AMPAR subunit GRIA2 leads to influence GRIA2 membrane cycling. The protein is Vesicle-fusing ATPase (NSF) of Cricetulus griseus (Chinese hamster).